We begin with the raw amino-acid sequence, 521 residues long: Jacalin-related lectin 38 (521 aa).

Residues 2–48 (MQPDHDLPYDLEGEILSHLPIQILARFRCVCKRWNTLFKERRFFNSD) form the F-box domain. 3 Kelch repeats span residues 145–190 (KHYK…PYSV), 326–373 (YIYI…ITQH), and 486–521 (MSFVLGGARGSKIIGFYGRSSDLYLTAFGVHFSPLP). In terms of domain architecture, Jacalin-type lectin spans 377-519 (SRFAPLRGIQ…LTAFGVHFSP (143 aa)).

This sequence belongs to the jacalin lectin family.

This is Jacalin-related lectin 38 (JAL38) from Arabidopsis thaliana (Mouse-ear cress).